Consider the following 120-residue polypeptide: Large ribosomal subunit protein eL34 (120 aa).

Belongs to the eukaryotic ribosomal protein eL34 family.

In Nicotiana tabacum (Common tobacco), this protein is Large ribosomal subunit protein eL34 (RPL34).